A 423-amino-acid chain; its full sequence is Histidine--tRNA ligase (423 aa).

The protein belongs to the class-II aminoacyl-tRNA synthetase family. Homodimer.

The protein resides in the cytoplasm. The catalysed reaction is tRNA(His) + L-histidine + ATP = L-histidyl-tRNA(His) + AMP + diphosphate + H(+). The polypeptide is Histidine--tRNA ligase (Anoxybacillus flavithermus (strain DSM 21510 / WK1)).